Consider the following 365-residue polypeptide: Phospho-N-acetylmuramoyl-pentapeptide-transferase (365 aa).

Helical transmembrane passes span 22–42 (YVSVRIIMISITSLLITLFLG), 74–94 (TMGGVLILSSVIISALLWGSL), 95–115 (SSIYLWILILVVIFFGAIGFF), 134–154 (KFALQSIFSIILAIVLFYLLS), 169–189 (LHIPMGIFLFVVLTFFIINGS), 201–221 (GLAIVPVVLVAAGLGIYAYIQ), 240–260 (LAEVAVFCAALCGSGLAFLWF), 268–288 (FMGDVGSLTLGAVLGVIAVMI), 292–312 (LIFFIMGLLFVVEALSVMLQV), and 342–362 (KVVIRFWIVSLILFLIGLVAI).

Belongs to the glycosyltransferase 4 family. MraY subfamily. Requires Mg(2+) as cofactor.

It is found in the cell inner membrane. It carries out the reaction UDP-N-acetyl-alpha-D-muramoyl-L-alanyl-gamma-D-glutamyl-meso-2,6-diaminopimeloyl-D-alanyl-D-alanine + di-trans,octa-cis-undecaprenyl phosphate = di-trans,octa-cis-undecaprenyl diphospho-N-acetyl-alpha-D-muramoyl-L-alanyl-D-glutamyl-meso-2,6-diaminopimeloyl-D-alanyl-D-alanine + UMP. It functions in the pathway cell wall biogenesis; peptidoglycan biosynthesis. In terms of biological role, catalyzes the initial step of the lipid cycle reactions in the biosynthesis of the cell wall peptidoglycan: transfers peptidoglycan precursor phospho-MurNAc-pentapeptide from UDP-MurNAc-pentapeptide onto the lipid carrier undecaprenyl phosphate, yielding undecaprenyl-pyrophosphoryl-MurNAc-pentapeptide, known as lipid I. This is Phospho-N-acetylmuramoyl-pentapeptide-transferase from Francisella philomiragia subsp. philomiragia (strain ATCC 25017 / CCUG 19701 / FSC 153 / O#319-036).